We begin with the raw amino-acid sequence, 548 residues long: Stretch-activated cation channel MID1 (548 aa).

The N-terminal stretch at 1-20 (MIVWQALFVVYCLFTTSIHG) is a signal peptide. Residues 21 to 341 (LFQDFNPFAN…YLTKKISNGD (321 aa)) lie on the Extracellular side of the membrane. N-linked (GlcNAc...) asparagine glycosylation is found at asparagine 32, asparagine 70, asparagine 112, asparagine 125, asparagine 159, asparagine 175, asparagine 228, asparagine 238, asparagine 265, asparagine 282, asparagine 285, asparagine 291, and asparagine 324. The chain crosses the membrane as a helical span at residues 342–358 (GLSSVGGILFSHVYFTT). Over 359–548 (RSTDVCSLIF…LMVIHPLDDT (190 aa)) the chain is Cytoplasmic.

Forms an oligomer with a molecular mass of 200 kDa by disulfide bonds. Interacts with CCH1 to form a Ca(2+) influx channel. N-glycosylated.

It is found in the cell membrane. Functionally, calcium-permeable, cation-selective stretch-activated channel (SAC) that functions together with CCH1 to mediate calcium entry into cells. Required during mating. Together with CCH1, essential for tolerance to iron stress, which leads to an increased oxidative poise, and to cold stress. In Saccharomyces cerevisiae (strain ATCC 204508 / S288c) (Baker's yeast), this protein is Stretch-activated cation channel MID1 (MID1).